The primary structure comprises 644 residues: Large subunit GTPase 1 homolog (644 aa).

The segment at M1–D31 is disordered. A phosphoserine mark is found at S93 and S97. Residues W164–P430 enclose the CP-type G domain. N212–D215 is a binding site for GTP. Positions K253–N345 are disordered. Acidic residues predominate over residues C302–C326. GTP-binding positions include G379–S386 and D423–G426. A disordered region spans residues V618–V644. The span at P622–V644 shows a compositional bias: basic residues.

Belongs to the TRAFAC class YlqF/YawG GTPase family. LSG1 subfamily.

The protein resides in the cytoplasm. The protein localises to the endoplasmic reticulum. It is found in the nucleus. It localises to the cajal body. The enzyme catalyses GTP + H2O = GDP + phosphate + H(+). Its function is as follows. Functions as a GTPase. May act by mediating the release of NMD3 from the 60S ribosomal subunit after export into the cytoplasm during the 60S ribosomal subunit maturation. This is Large subunit GTPase 1 homolog from Mus musculus (Mouse).